A 386-amino-acid polypeptide reads, in one-letter code: NADH-ubiquinone oxidoreductase 49 kDa subunit homolog (386 aa).

This sequence belongs to the complex I 49 kDa subunit family.

It localises to the mitochondrion. The catalysed reaction is a ubiquinone + NADH + 5 H(+)(in) = a ubiquinol + NAD(+) + 4 H(+)(out). Its function is as follows. Core subunit of the mitochondrial membrane respiratory chain NADH dehydrogenase (Complex I) that is believed to belong to the minimal assembly required for catalysis. Complex I functions in the transfer of electrons from NADH to the respiratory chain. The immediate electron acceptor for the enzyme is believed to be ubiquinone. Component of the iron-sulfur (IP) fragment of the enzyme. Component of the iron-sulfur (IP) fragment of the enzyme. In Trypanosoma brucei brucei, this protein is NADH-ubiquinone oxidoreductase 49 kDa subunit homolog (NAD7).